Reading from the N-terminus, the 620-residue chain is Chaperone protein DnaK (620 aa).

Position 197 is a phosphothreonine; by autocatalysis (Thr-197). Residues 597–620 (AMANKNNAEQPKKKDDDVIDAEVE) are disordered.

Belongs to the heat shock protein 70 family.

Its function is as follows. Acts as a chaperone. This is Chaperone protein DnaK from Helicobacter acinonychis (strain Sheeba).